A 210-amino-acid chain; its full sequence is Na(+)-translocating NADH-quinone reductase subunit D (210 aa).

The next 6 helical transmembrane spans lie at 14–34, 42–62, 72–92, 103–123, 131–151, and 178–198; these read PIVN…ALAV, LVMA…ISMI, IIVQ…LLQA, VFVG…AYAM, FMDG…VGFV, and NGLL…IWII.

Belongs to the NqrDE/RnfAE family. In terms of assembly, composed of six subunits; NqrA, NqrB, NqrC, NqrD, NqrE and NqrF.

It localises to the cell inner membrane. It catalyses the reaction a ubiquinone + n Na(+)(in) + NADH + H(+) = a ubiquinol + n Na(+)(out) + NAD(+). Its function is as follows. NQR complex catalyzes the reduction of ubiquinone-1 to ubiquinol by two successive reactions, coupled with the transport of Na(+) ions from the cytoplasm to the periplasm. NqrA to NqrE are probably involved in the second step, the conversion of ubisemiquinone to ubiquinol. This chain is Na(+)-translocating NADH-quinone reductase subunit D, found in Shewanella oneidensis (strain ATCC 700550 / JCM 31522 / CIP 106686 / LMG 19005 / NCIMB 14063 / MR-1).